The following is a 1097-amino-acid chain: uncharacterized protein (1097 aa).

Positions 31–1087 (LLNVARQEEE…TALNKLRTRH (1057 aa)) form a coiled coil.

It belongs to the TRAFAC class myosin-kinesin ATPase superfamily. Myosin family. Specifically expressed in muscles of the head including temporalis and tensor veli palatini.

In terms of biological role, has most probably lost the function in masticatory muscles contraction suspected for its homologs in dog (AC F1PT61) and apes. This is an uncharacterized protein from Homo sapiens (Human).